A 520-amino-acid polypeptide reads, in one-letter code: Poly(A)-specific ribonuclease PNLDC1 (520 aa).

Mg(2+) contacts are provided by Asp-17, Glu-19, Asp-260, and Asp-354. A helical membrane pass occupies residues 497 to 513 (CLLQVCGIVTAWALLAF).

The protein belongs to the CAF1 family. The cofactor is Mg(2+).

Its subcellular location is the endoplasmic reticulum membrane. The enzyme catalyses Exonucleolytic cleavage of poly(A) to 5'-AMP.. Functionally, 3'-exoribonuclease that has a preference for poly(A) tails of mRNAs, thereby efficiently degrading poly(A) tails. Exonucleolytic degradation of the poly(A) tail is often the first step in the decay of eukaryotic mRNAs and is also used to silence certain maternal mRNAs translationally during oocyte maturation and early embryonic development. May act as a regulator of multipotency in embryonic stem cells. Is a critical factor for proper spermatogenesis, involved in pre-piRNAs processing to generate mature piRNAs. The chain is Poly(A)-specific ribonuclease PNLDC1 from Pongo abelii (Sumatran orangutan).